A 325-amino-acid polypeptide reads, in one-letter code: Bifunctional ligase/repressor BirA (325 aa).

The H-T-H motif DNA-binding region spans 23-42; sequence GQKISDALGCSRTAVWKHIE. The region spanning 74 to 262 is the BPL/LPL catalytic domain; that stretch reads RFGLKTEVMG…CFEKRYRDYM (189 aa). Biotin is bound by residues Q118, 122 to 124, and K189; that span reads RGR.

This sequence belongs to the biotin--protein ligase family.

It catalyses the reaction biotin + L-lysyl-[protein] + ATP = N(6)-biotinyl-L-lysyl-[protein] + AMP + diphosphate + H(+). In terms of biological role, acts both as a biotin--[acetyl-CoA-carboxylase] ligase and a repressor. The protein is Bifunctional ligase/repressor BirA of Bacillus spizizenii (strain ATCC 23059 / NRRL B-14472 / W23) (Bacillus subtilis subsp. spizizenii).